We begin with the raw amino-acid sequence, 368 residues long: Flagellar P-ring protein (368 aa).

Positions 1–24 (MDKPMKRIFVVLVILLVLPQLALA) are cleaved as a signal peptide.

It belongs to the FlgI family. In terms of assembly, the basal body constitutes a major portion of the flagellar organelle and consists of four rings (L,P,S, and M) mounted on a central rod.

It is found in the periplasm. The protein resides in the bacterial flagellum basal body. In terms of biological role, assembles around the rod to form the L-ring and probably protects the motor/basal body from shearing forces during rotation. The polypeptide is Flagellar P-ring protein (Geobacter sulfurreducens (strain ATCC 51573 / DSM 12127 / PCA)).